The following is a 234-amino-acid chain: Ubiquitin domain-containing protein 1 (234 aa).

The interval 1 to 47 (MGGCVGTHHDSSGSLNENSDGTGVALGRNQPLKKDKPKWKSDYPMTD) is disordered. Over residues 12-21 (SGSLNENSDG) the composition is skewed to polar residues. Positions 32-41 (LKKDKPKWKS) are enriched in basic and acidic residues. A Ubiquitin-like domain is found at 152-227 (CQLRLRLSTG…VQVIVSQPIP (76 aa)).

Functionally, may be involved in the regulation of cellular senescence through a positive feedback loop with TP53. The chain is Ubiquitin domain-containing protein 1 (ubtd1) from Xenopus laevis (African clawed frog).